A 325-amino-acid polypeptide reads, in one-letter code: Lipid droplet-associated hydrolase (325 aa).

Ser-139 functions as the Nucleophile in the catalytic mechanism. Residues Asp-271 and His-300 each act as charge relay system in the active site.

It belongs to the AB hydrolase superfamily. LDAH family.

Its subcellular location is the lipid droplet. It is found in the endoplasmic reticulum. It catalyses the reaction a cholesterol ester + H2O = cholesterol + a fatty acid + H(+). Its function is as follows. Probable serine lipid hydrolase associated with lipid droplets. Has low cholesterol esterase activity. Appears to lack triglyceride lipase activity. Involved in cholesterol and triglyceride homeostasis; stimulates cellular triglyceride accumulation and cellular cholesterol release. Acts antagonistically with PNPLA2/ATGL in regulation of cellular lipid stores. May regulate triglyceride accumulation indirectly through stimulation of PNPLA2/ATGL ubiquitination and proteasomal degradation. Promotes microtubule-dependent lipid droplet fusion. Highly expressed in macrophage-rich areas in atherosclerotic lesions, suggesting that it could promote cholesterol ester turnover in macrophages. This Rattus norvegicus (Rat) protein is Lipid droplet-associated hydrolase.